The following is an 874-amino-acid chain: Tyrosine-protein kinase receptor TYRO3 (874 aa).

The signal sequence occupies residues 1-20; sequence MEVSLCILLFLLHFNEGIHG. 2 Ig-like C2-type domains span residues 21 to 106 and 117 to 198; these read VRFT…IISS and PHFG…GTVH. Over 21–411 the chain is Extracellular; the sequence is VRFTQKPFHQ…QAQTQRGHMW (391 aa). An intrachain disulfide couples Cys-42 to Cys-95. Residues Asn-135, Asn-174, Asn-217, Asn-270, Asn-305, and Asn-373 are each glycosylated (N-linked (GlcNAc...) asparagine). A disulfide bond links Cys-138 and Cys-181. Fibronectin type-III domains follow at residues 202-297 and 299-403; these read RPDS…TPQA and PSAA…AMQA. Residues 412 to 432 form a helical membrane-spanning segment; it reads VGLLFGLLVATMVGLLLIVLI. The Cytoplasmic segment spans residues 433 to 874; sequence RNRGKETQFG…EEEEDVIINV (442 aa). The Protein kinase domain maps to 497-768; sequence LTLGRMLGKG…QHLIDQLELL (272 aa). ATP is bound by residues 503–511 and Lys-529; that span reads LGKGEFGSV. The Proton acceptor role is filled by Asp-634. Tyr-665 is subject to Phosphotyrosine; by autocatalysis.

It belongs to the protein kinase superfamily. Tyr protein kinase family. AXL/UFO subfamily.

The protein localises to the cell membrane. The catalysed reaction is L-tyrosyl-[protein] + ATP = O-phospho-L-tyrosyl-[protein] + ADP + H(+). In terms of biological role, may be involved in cell adhesion processes, particularly in the central nervous system. In Danio rerio (Zebrafish), this protein is Tyrosine-protein kinase receptor TYRO3 (tyro3).